A 166-amino-acid polypeptide reads, in one-letter code: Lipoprotein signal peptidase (166 aa).

The next 3 helical transmembrane spans lie at 12-32 (WLWL…LILQ), 70-90 (WFFA…MYRS), and 102-122 (ALII…GFVV). Catalysis depends on residues aspartate 123 and aspartate 141. Residues 137–157 (FNLADTAICIGAALIVLEGFL) form a helical membrane-spanning segment.

Belongs to the peptidase A8 family.

Its subcellular location is the cell inner membrane. It carries out the reaction Release of signal peptides from bacterial membrane prolipoproteins. Hydrolyzes -Xaa-Yaa-Zaa-|-(S,diacylglyceryl)Cys-, in which Xaa is hydrophobic (preferably Leu), and Yaa (Ala or Ser) and Zaa (Gly or Ala) have small, neutral side chains.. Its pathway is protein modification; lipoprotein biosynthesis (signal peptide cleavage). In terms of biological role, this protein specifically catalyzes the removal of signal peptides from prolipoproteins. The sequence is that of Lipoprotein signal peptidase from Salmonella typhi.